We begin with the raw amino-acid sequence, 221 residues long: DELTA-actitoxin-Ucs1a (221 aa).

The first 19 residues, 1 to 19 (MNRLIVLCLFVAMIYATIA), serve as a signal peptide directing secretion. Positions 20 to 42 (LPKKEDISNDERSISVSKVPVKK) are excised as a propeptide. Residues 45 to 54 (AIAGAVIEGA) are plays an important role in the hemolytic activity. Residues 53-72 (GAKLTFGILEKILTVLGDIN) form an N-terminal region region. The phosphocholine site is built by S96, V129, S147, P149, Y175, Y179, and Y180. The interval 147–162 (SVPYDYNLYSNWWNIK) is trp-rich region, which is important for the binding to lipid membrane. The short motif at 186 to 188 (KGD) is the Cell attachment site, crucial for protein stability element.

The protein belongs to the actinoporin family. Sea anemone subfamily. As to quaternary structure, octamer or nonamer in membranes. Monomer in the soluble state.

Its subcellular location is the secreted. The protein localises to the nematocyst. The protein resides in the target cell membrane. Functionally, pore-forming protein that forms cations-selective hydrophilic pores of around 1 nm and causes cytolysis. Pore formation is a multi-step process that involves specific recognition of membrane sphingomyelin (but neither cholesterol nor phosphatidylcholine) using aromatic rich region and adjacent phosphocholine (POC) binding site, firm binding to the membrane (mainly driven by hydrophobic interactions) accompanied by the transfer of the N-terminal region to the lipid-water interface and finally pore formation after oligomerization of monomers. This Urticina crassicornis (Mottled anemone) protein is DELTA-actitoxin-Ucs1a.